The chain runs to 590 residues: 4-oxocyclohex-2-ene-1-carboxylate 5-dehydrogenase (590 aa).

It belongs to the FAD-dependent oxidoreductase 2 family. Forms multimers. FAD serves as cofactor.

The enzyme catalyses 4-oxocyclohex-2-ene-1-carboxylate + NAD(+) = 4-oxocyclohexa-2,5-diene-1-carboxylate + NADH + H(+). Desaturase involved in a cyclohexanecarboxylate (CHCA) degradation pathway. Probably catalyzes the conversion of 4-oxocyclohexenecarboxylate to 4-oxocyclohex-2,5-dienecarboxylate, which is spontaneously isomerized to 4-hydroxybenzoate (4-HBA). This is 4-oxocyclohex-2-ene-1-carboxylate 5-dehydrogenase from Sinomonas cyclohexanicum (Corynebacterium cyclohexanicum).